The chain runs to 486 residues: ATP-dependent 6-phosphofructokinase (486 aa).

Residues G105, 171 to 172 (RG), and 196 to 199 (GDGT) contribute to the ATP site. Residue D197 participates in Mg(2+) binding. Substrate-binding positions include 225–227 (TID), 270–272 (MGR), E323, and 378–381 (YMIR). Catalysis depends on D227, which acts as the Proton acceptor. A Peroxisomal targeting signal motif is present at residues 484-486 (SKV).

Belongs to the phosphofructokinase type A (PFKA) family. PPi-dependent PFK group II subfamily. Atypical ATP-dependent clade 'X' sub-subfamily. Homotetramer. Mg(2+) is required as a cofactor.

The protein localises to the glycosome. It catalyses the reaction beta-D-fructose 6-phosphate + ATP = beta-D-fructose 1,6-bisphosphate + ADP + H(+). It participates in carbohydrate degradation; glycolysis; D-glyceraldehyde 3-phosphate and glycerone phosphate from D-glucose: step 3/4. With respect to regulation, allosterically activated by AMP. In terms of biological role, catalyzes the phosphorylation of D-fructose 6-phosphate to fructose 1,6-bisphosphate by ATP, the first committing step of glycolysis. In Leishmania donovani, this protein is ATP-dependent 6-phosphofructokinase.